We begin with the raw amino-acid sequence, 333 residues long: Ketol-acid reductoisomerase (NADP(+)) (333 aa).

The KARI N-terminal Rossmann domain occupies 1 to 171 (MSNDTQPKIA…GGARANIIKT (171 aa)). NADP(+) contacts are provided by residues 14-17 (YGSQ), arginine 37, threonine 42, and 72-75 (DMVQ). The active site involves histidine 97. An NADP(+)-binding site is contributed by glycine 123. A KARI C-terminal knotted domain is found at 172–317 (TFKEETETDL…KKLRAKMVWL (146 aa)). 4 residues coordinate Mg(2+): aspartate 180, glutamate 184, glutamate 216, and glutamate 220. Serine 241 serves as a coordination point for substrate.

This sequence belongs to the ketol-acid reductoisomerase family. Mg(2+) serves as cofactor.

The enzyme catalyses (2R)-2,3-dihydroxy-3-methylbutanoate + NADP(+) = (2S)-2-acetolactate + NADPH + H(+). It carries out the reaction (2R,3R)-2,3-dihydroxy-3-methylpentanoate + NADP(+) = (S)-2-ethyl-2-hydroxy-3-oxobutanoate + NADPH + H(+). It participates in amino-acid biosynthesis; L-isoleucine biosynthesis; L-isoleucine from 2-oxobutanoate: step 2/4. The protein operates within amino-acid biosynthesis; L-valine biosynthesis; L-valine from pyruvate: step 2/4. Its function is as follows. Involved in the biosynthesis of branched-chain amino acids (BCAA). Catalyzes an alkyl-migration followed by a ketol-acid reduction of (S)-2-acetolactate (S2AL) to yield (R)-2,3-dihydroxy-isovalerate. In the isomerase reaction, S2AL is rearranged via a Mg-dependent methyl migration to produce 3-hydroxy-3-methyl-2-ketobutyrate (HMKB). In the reductase reaction, this 2-ketoacid undergoes a metal-dependent reduction by NADPH to yield (R)-2,3-dihydroxy-isovalerate. The polypeptide is Ketol-acid reductoisomerase (NADP(+)) (Xanthomonas oryzae pv. oryzae (strain MAFF 311018)).